The following is a 104-amino-acid chain: Cell cycle protein GpsB (104 aa).

A coiled-coil region spans residues 34-72; the sequence is LDVVIQDYEVFQKKIERLEQEIHQLRTEAKRAASERQTR. Basic and acidic residues predominate over residues 60-71; sequence TEAKRAASERQT. Residues 60–82 form a disordered region; it reads TEAKRAASERQTRHQTSPSVGST. The span at 73–82 shows a compositional bias: polar residues; it reads HQTSPSVGST.

The protein belongs to the GpsB family. In terms of assembly, forms polymers through the coiled coil domains. Interacts with PBP1, MreC and EzrA.

The protein localises to the cytoplasm. Functionally, divisome component that associates with the complex late in its assembly, after the Z-ring is formed, and is dependent on DivIC and PBP2B for its recruitment to the divisome. Together with EzrA, is a key component of the system that regulates PBP1 localization during cell cycle progression. Its main role could be the removal of PBP1 from the cell pole after pole maturation is completed. Also contributes to the recruitment of PBP1 to the division complex. Not essential for septum formation. This Halalkalibacterium halodurans (strain ATCC BAA-125 / DSM 18197 / FERM 7344 / JCM 9153 / C-125) (Bacillus halodurans) protein is Cell cycle protein GpsB.